The following is a 244-amino-acid chain: UDP-2,3-diacylglucosamine hydrolase (244 aa).

Asp8, His10, Asp41, Asn79, and His114 together coordinate Mn(2+). 79-80 contributes to the substrate binding site; the sequence is NR. Substrate is bound by residues Asp122, Lys164, Lys167, and His195. Residues His195 and His197 each coordinate Mn(2+).

This sequence belongs to the LpxH family. Mn(2+) serves as cofactor.

It is found in the cell inner membrane. It catalyses the reaction UDP-2-N,3-O-bis[(3R)-3-hydroxytetradecanoyl]-alpha-D-glucosamine + H2O = 2-N,3-O-bis[(3R)-3-hydroxytetradecanoyl]-alpha-D-glucosaminyl 1-phosphate + UMP + 2 H(+). It participates in glycolipid biosynthesis; lipid IV(A) biosynthesis; lipid IV(A) from (3R)-3-hydroxytetradecanoyl-[acyl-carrier-protein] and UDP-N-acetyl-alpha-D-glucosamine: step 4/6. Its function is as follows. Hydrolyzes the pyrophosphate bond of UDP-2,3-diacylglucosamine to yield 2,3-diacylglucosamine 1-phosphate (lipid X) and UMP by catalyzing the attack of water at the alpha-P atom. Involved in the biosynthesis of lipid A, a phosphorylated glycolipid that anchors the lipopolysaccharide to the outer membrane of the cell. This Vibrio atlanticus (strain LGP32) (Vibrio splendidus (strain Mel32)) protein is UDP-2,3-diacylglucosamine hydrolase.